Reading from the N-terminus, the 289-residue chain is Cell division protein ZipA (289 aa).

Residue Met1 is a topological domain, periplasmic. A helical transmembrane segment spans residues 2 to 22; that stretch reads DIGLREWLIVIGLIVIAGILF. Topologically, residues 23–289 are cytoplasmic; that stretch reads DGWRRMRGGK…HERRSLMQKR (267 aa). The tract at residues 65-141 is disordered; the sequence is HREPSFDEQD…KEREKAPAVA (77 aa). The segment covering 81–99 has biased composition (basic and acidic residues); sequence RETKERKGGKRQEEPRQGD. The segment covering 100-114 has biased composition (acidic residues); that stretch reads LDLDEGLALEADPSD.

The protein belongs to the ZipA family. Interacts with FtsZ via their C-terminal domains.

The protein resides in the cell inner membrane. Essential cell division protein that stabilizes the FtsZ protofilaments by cross-linking them and that serves as a cytoplasmic membrane anchor for the Z ring. Also required for the recruitment to the septal ring of downstream cell division proteins. The polypeptide is Cell division protein ZipA (Pseudomonas aeruginosa (strain UCBPP-PA14)).